The primary structure comprises 278 residues: UPF0276 protein Swit_4400 (278 aa).

The protein belongs to the UPF0276 family.

The sequence is that of UPF0276 protein Swit_4400 from Rhizorhabdus wittichii (strain DSM 6014 / CCUG 31198 / JCM 15750 / NBRC 105917 / EY 4224 / RW1) (Sphingomonas wittichii).